Here is a 31-residue protein sequence, read N- to C-terminus: Zinc metalloproteinase alsophinase (31 aa).

The residue at position 1 (Gln-1) is a Pyrrolidone carboxylic acid. The 23-residue stretch at 9–31 (KYIEFYLVVDNGMFXKYSXXFTV) folds into the Peptidase M12B domain. Position 12 (Glu-12) interacts with Ca(2+).

As to quaternary structure, monomer. Zn(2+) is required as a cofactor. Post-translationally, contains 9 disulfide bonds. In terms of tissue distribution, expressed by the venom gland.

It is found in the secreted. With respect to regulation, inhibited by 1,10-phenanthroline. In terms of biological role, snake venom zinc metalloprotease that has potent hemorrhagic activity, fibrinogenolytic activity on the alpha-subunit of human fibrinogen (FGA) in vitro and provokes necrosis in skin, muscle and lung tissues. May contribute to local edema and ecchymosis induced by venom. Hydrolyzes model substrate (beta-chain of insulin) at Ala(14)-Leu(15). In Borikenophis portoricensis (Puerto Rican racer), this protein is Zinc metalloproteinase alsophinase.